The primary structure comprises 179 residues: Acireductone dioxygenase (179 aa).

Histidine 85, histidine 87, glutamate 91, and histidine 132 together coordinate Fe(2+). Ni(2+) is bound by residues histidine 85, histidine 87, glutamate 91, and histidine 132.

The protein belongs to the acireductone dioxygenase (ARD) family. It depends on Fe(2+) as a cofactor. Requires Ni(2+) as cofactor.

It is found in the cytoplasm. It localises to the nucleus. The catalysed reaction is 1,2-dihydroxy-5-(methylsulfanyl)pent-1-en-3-one + O2 = 4-methylsulfanyl-2-oxobutanoate + formate + 2 H(+). The enzyme catalyses 1,2-dihydroxy-5-(methylsulfanyl)pent-1-en-3-one + O2 = 3-(methylsulfanyl)propanoate + CO + formate + 2 H(+). It participates in amino-acid biosynthesis; L-methionine biosynthesis via salvage pathway; L-methionine from S-methyl-5-thio-alpha-D-ribose 1-phosphate: step 5/6. In terms of biological role, catalyzes 2 different reactions between oxygen and the acireductone 1,2-dihydroxy-3-keto-5-methylthiopentene (DHK-MTPene) depending upon the metal bound in the active site. Fe-containing acireductone dioxygenase (Fe-ARD) produces formate and 2-keto-4-methylthiobutyrate (KMTB), the alpha-ketoacid precursor of methionine in the methionine recycle pathway. Ni-containing acireductone dioxygenase (Ni-ARD) produces methylthiopropionate, carbon monoxide and formate, and does not lie on the methionine recycle pathway. In Saccharomyces cerevisiae (strain ATCC 204508 / S288c) (Baker's yeast), this protein is Acireductone dioxygenase.